The following is a 172-amino-acid chain: Histone H1-like protein HC2 (172 aa).

Positions 1–77 are disordered; sequence MIGAQKKQSG…TVAKKPAVKK (77 aa). The segment covering 8 to 77 has biased composition (basic residues); sequence QSGKKTASRA…TVAKKPAVKK (70 aa).

The protein belongs to the histone H1/H5 family. HCT subfamily.

Functionally, might have a role in establishing the nucleoid structure of elementary bodies. This chain is Histone H1-like protein HC2 (hctB), found in Chlamydia pneumoniae (Chlamydophila pneumoniae).